We begin with the raw amino-acid sequence, 65 residues long: Large ribosomal subunit protein bL35 (65 aa).

Belongs to the bacterial ribosomal protein bL35 family.

The chain is Large ribosomal subunit protein bL35 from Rubrobacter xylanophilus (strain DSM 9941 / JCM 11954 / NBRC 16129 / PRD-1).